Here is a 250-residue protein sequence, read N- to C-terminus: MVKIEVGSVGDSFSVSSLKAYLSEFIATLLFVFAGVGSAVAFAKLTSDGALDPAGLVAIAIAHAFALFVGVSIAANISGGHLNPAVTLGLAIGGNITLITGFFYWIAQCLGSIVACLLLVFVTNGKSVPTHGVSAGLGAVEGVVMEIVVTFALVYTVYATAADPKKGSLGTIAPIAIGFIVGANILAAGPFSGGSMNPARSFGPAVVSGDLSQIWIYWVGPLVGGALAGLIYGDVFIGSYEAVETREIRV.

The residue at position 1 (Met-1) is an N-acetylmethionine. The Cytoplasmic segment spans residues 1 to 24; that stretch reads MVKIEVGSVGDSFSVSSLKAYLSE. Lys-3 carries the N6,N6-dimethyllysine modification. Residues 25 to 45 form a helical membrane-spanning segment; that stretch reads FIATLLFVFAGVGSAVAFAKL. Topologically, residues 46–54 are vacuolar; sequence TSDGALDPA. A helical membrane pass occupies residues 55–75; that stretch reads GLVAIAIAHAFALFVGVSIAA. Residues 76 to 101 lie on the Cytoplasmic side of the membrane; that stretch reads NISGGHLNPAVTLGLAIGGNITLITG. An NPA 1 motif is present at residues 83 to 85; it reads NPA. The helical transmembrane segment at 102 to 122 threads the bilayer; the sequence is FFYWIAQCLGSIVACLLLVFV. The Vacuolar segment spans residues 123–134; it reads TNGKSVPTHGVS. Residues 135-155 traverse the membrane as a helical segment; it reads AGLGAVEGVVMEIVVTFALVY. The Cytoplasmic segment spans residues 156-168; sequence TVYATAADPKKGS. The chain crosses the membrane as a helical span at residues 169–189; the sequence is LGTIAPIAIGFIVGANILAAG. At 190-217 the chain is on the vacuolar side; it reads PFSGGSMNPARSFGPAVVSGDLSQIWIY. The NPA 2 motif lies at 197-199; it reads NPA. A helical transmembrane segment spans residues 218–238; that stretch reads WVGPLVGGALAGLIYGDVFIG. At 239–250 the chain is on the cytoplasmic side; it reads SYEAVETREIRV.

The protein belongs to the MIP/aquaporin (TC 1.A.8) family. TIP (TC 1.A.8.10) subfamily. As to quaternary structure, interacts with cucumber mosaic virus (CMV) Protein 1a. Widely expressed.

The protein resides in the vacuole membrane. Its function is as follows. Transports methylammonium or ammonium in yeast cells, preferentially at high medium pH. May participate in vacuolar compartmentation and detoxification of ammonium. The polypeptide is Aquaporin TIP2-3 (TIP2-3) (Arabidopsis thaliana (Mouse-ear cress)).